A 176-amino-acid polypeptide reads, in one-letter code: Ribosome rescue factor SmrB (176 aa).

One can recognise a Smr domain in the interval 98–173; the sequence is LDLHGLTQMQ…GTAAILLLVE (76 aa).

This sequence belongs to the SmrB family. As to quaternary structure, associates with collided ribosomes, but not with correctly translating polysomes.

Acts as a ribosome collision sensor. Detects stalled/collided disomes (pairs of ribosomes where the leading ribosome is stalled and a second ribosome has collided with it) and endonucleolytically cleaves mRNA at the 5' boundary of the stalled ribosome. Stalled/collided disomes form a new interface (primarily via the 30S subunits) that binds SmrB. Cleaved mRNA becomes available for tmRNA ligation, leading to ribosomal subunit dissociation and rescue of stalled ribosomes. In Serratia proteamaculans (strain 568), this protein is Ribosome rescue factor SmrB.